The sequence spans 392 residues: Formate-dependent phosphoribosylglycinamide formyltransferase (392 aa).

Residues 22–23 and E82 each bind N(1)-(5-phospho-beta-D-ribosyl)glycinamide; that span reads EL. Residues R114, K155, 160–165, 195–198, and E203 contribute to the ATP site; these read SSGKGQ and EGVV. Residues 119 to 308 enclose the ATP-grasp domain; it reads RLAAEELGLP…EFALHVRAFL (190 aa). 2 residues coordinate Mg(2+): E267 and E279. Residues D286, K355, and 362–363 each bind N(1)-(5-phospho-beta-D-ribosyl)glycinamide; that span reads RR.

Belongs to the PurK/PurT family. In terms of assembly, homodimer.

It carries out the reaction N(1)-(5-phospho-beta-D-ribosyl)glycinamide + formate + ATP = N(2)-formyl-N(1)-(5-phospho-beta-D-ribosyl)glycinamide + ADP + phosphate + H(+). It functions in the pathway purine metabolism; IMP biosynthesis via de novo pathway; N(2)-formyl-N(1)-(5-phospho-D-ribosyl)glycinamide from N(1)-(5-phospho-D-ribosyl)glycinamide (formate route): step 1/1. Its function is as follows. Involved in the de novo purine biosynthesis. Catalyzes the transfer of formate to 5-phospho-ribosyl-glycinamide (GAR), producing 5-phospho-ribosyl-N-formylglycinamide (FGAR). Formate is provided by PurU via hydrolysis of 10-formyl-tetrahydrofolate. This chain is Formate-dependent phosphoribosylglycinamide formyltransferase, found in Salmonella dublin (strain CT_02021853).